A 94-amino-acid polypeptide reads, in one-letter code: Large ribosomal subunit protein bL28 (94 aa).

This sequence belongs to the bacterial ribosomal protein bL28 family.

This chain is Large ribosomal subunit protein bL28, found in Novosphingobium aromaticivorans (strain ATCC 700278 / DSM 12444 / CCUG 56034 / CIP 105152 / NBRC 16084 / F199).